A 303-amino-acid chain; its full sequence is Shikimate kinase 1, chloroplastic (303 aa).

A chloroplast-targeting transit peptide spans 1–66 (MEAAITQRIQ…QRRAVSPAVS (66 aa)). 109–116 (GMMGSGKT) is a binding site for ATP. Threonine 116 serves as a coordination point for Mg(2+). Residues aspartate 134, arginine 159, and glycine 181 each coordinate substrate. ATP is bound at residue arginine 220.

This sequence belongs to the shikimate kinase family. In terms of assembly, homodimer. The cofactor is Mg(2+).

It localises to the plastid. Its subcellular location is the chloroplast. It carries out the reaction shikimate + ATP = 3-phosphoshikimate + ADP + H(+). It functions in the pathway metabolic intermediate biosynthesis; chorismate biosynthesis; chorismate from D-erythrose 4-phosphate and phosphoenolpyruvate: step 5/7. In terms of biological role, catalyzes the specific phosphorylation of the 3-hydroxyl group of shikimic acid using ATP as a cosubstrate. This is Shikimate kinase 1, chloroplastic (SK1) from Arabidopsis thaliana (Mouse-ear cress).